A 510-amino-acid polypeptide reads, in one-letter code: ATP synthase subunit alpha (510 aa).

169 to 176 serves as a coordination point for ATP; the sequence is GDRQTGKT.

This sequence belongs to the ATPase alpha/beta chains family. F-type ATPases have 2 components, CF(1) - the catalytic core - and CF(0) - the membrane proton channel. CF(1) has five subunits: alpha(3), beta(3), gamma(1), delta(1), epsilon(1). CF(0) has four main subunits: a(1), b(1), b'(1) and c(9-12).

The protein localises to the cell inner membrane. The catalysed reaction is ATP + H2O + 4 H(+)(in) = ADP + phosphate + 5 H(+)(out). Functionally, produces ATP from ADP in the presence of a proton gradient across the membrane. The alpha chain is a regulatory subunit. The polypeptide is ATP synthase subunit alpha (Rhodospirillum rubrum (strain ATCC 11170 / ATH 1.1.1 / DSM 467 / LMG 4362 / NCIMB 8255 / S1)).